Here is a 130-residue protein sequence, read N- to C-terminus: UPF0102 protein RPA0323 (130 aa).

This sequence belongs to the UPF0102 family.

This chain is UPF0102 protein RPA0323, found in Rhodopseudomonas palustris (strain ATCC BAA-98 / CGA009).